The following is a 313-amino-acid chain: MASFRKLTLSEKVPPNHPSRKKVNFLDMSLDDIIIYKELEGTNAEEEKNKRQNHSKKESPSRQQSKAHRHRHRRGYSRCRSNSEEGNHDKKPSQKPSGFKSGQHPLNGQPLIEQEKCSDNYEAQAEKNQGQSEGNQHQSEGNPDKSEESQGQPEENHHSERSRNHLERSLSQSDRSQGQLKRHHPQYERSHGQYKRSHGQSERSHGHSERSHGHSERSHGHSERSHGHSKRSRSQGDLVDTQSDLIATQRDLIATQKDLIATQRDLIATQRDLIVTQRDLVATERDLINQSGRSHGQSERHQRYSTGKNTITT.

The segment at 1–119 (MASFRKLTLS…PLIEQEKCSD (119 aa)) is interaction with DDX39B/UAP56. Disordered stretches follow at residues 1-238 (MASF…QGDL) and 290-313 (QSGR…TITT). The short motif at 22-40 (KVNFLDMSLDDIIIYKELE) is the UAP56-binding motif (UBM); required for proper nuclear localization element. The segment covering 34-60 (IIYKELEGTNAEEEKNKRQNHSKKESP) has biased composition (basic and acidic residues). Residues 51-80 (RQNHSKKESPSRQQSKAHRHRHRRGYSRCR) form an arg-rich; required for RNA-binding region. A compositionally biased stretch (basic residues) spans 65-77 (SKAHRHRHRRGYS). Over residues 81–92 (SNSEEGNHDKKP) the composition is skewed to basic and acidic residues. The span at 126 to 141 (EKNQGQSEGNQHQSEG) shows a compositional bias: polar residues. The segment covering 142-168 (NPDKSEESQGQPEENHHSERSRNHLER) has biased composition (basic and acidic residues). Polar residues predominate over residues 169–179 (SLSQSDRSQGQ). An RS-containing His-rich (RS-H); necessary for nuclear localization region spans residues 178–236 (GQLKRHHPQYERSHGQYKRSHGQSERSHGHSERSHGHSERSHGHSERSHGHSKRSRSQG). The segment covering 199–226 (GQSERSHGHSERSHGHSERSHGHSERSH) has biased composition (basic and acidic residues). A Phosphoserine modification is found at serine 234. Residues 238-287 (LVDTQSDLIATQRDLIATQKDLIATQRDLIATQRDLIVTQRDLVATERDL) form a leucine-zipper; required for RNA-binding and for its relocalization to the cytoplasm during cell division region. An interaction with NXF1 region spans residues 241 to 313 (TQSDLIATQR…YSTGKNTITT (73 aa)). Residues 304–313 (YSTGKNTITT) show a composition bias toward polar residues.

Interacts with NXF1, NXF2, THOC1, THOC5, DDX39B/UAP56 and SRRT. In terms of tissue distribution, expressed specifically in testis. Also expressed in a wide variety of cancer types, but particularly high levels of expression observed in melanoma cells.

Its subcellular location is the nucleus. It localises to the cytoplasm. Its function is as follows. Export adapter involved in mRNA nuclear export in cancer cells. Binds and enhances the RNA-binding activity of the nuclear RNA export factor NXF1. Can restore mRNA export function in cells compromised by loss of mRNA export adapters. The polypeptide is Leucine zipper protein 4 (LUZP4) (Homo sapiens (Human)).